The following is a 384-amino-acid chain: S-adenosylmethionine synthase (384 aa).

H15 contacts ATP. D17 is a binding site for Mg(2+). E43 lines the K(+) pocket. Residues E56 and Q99 each contribute to the L-methionine site. A flexible loop region spans residues 99 to 109; sequence QSPDINQGVDR. ATP contacts are provided by residues 164–166, 230–231, D239, 245–246, A262, and K266; these read DAK, RF, and RK. D239 provides a ligand contact to L-methionine. K270 is a binding site for L-methionine.

The protein belongs to the AdoMet synthase family. In terms of assembly, homotetramer; dimer of dimers. Requires Mg(2+) as cofactor. K(+) is required as a cofactor.

The protein localises to the cytoplasm. It carries out the reaction L-methionine + ATP + H2O = S-adenosyl-L-methionine + phosphate + diphosphate. The protein operates within amino-acid biosynthesis; S-adenosyl-L-methionine biosynthesis; S-adenosyl-L-methionine from L-methionine: step 1/1. Catalyzes the formation of S-adenosylmethionine (AdoMet) from methionine and ATP. The overall synthetic reaction is composed of two sequential steps, AdoMet formation and the subsequent tripolyphosphate hydrolysis which occurs prior to release of AdoMet from the enzyme. This Citrobacter koseri (strain ATCC BAA-895 / CDC 4225-83 / SGSC4696) protein is S-adenosylmethionine synthase.